The following is a 131-amino-acid chain: Maturin (131 aa).

Residue Tyr-34 is modified to Phosphotyrosine. Residues Phe-107 to Glu-120 show a composition bias toward acidic residues. A disordered region spans residues Phe-107–Gln-131.

Belongs to the MTURN family. Phosphorylation at Tyr-34 is essential for its ability to promote megakaryocyte differentiation. As to expression, expressed in the thymus, bone marrow and spleen.

Its subcellular location is the cytoplasm. Its function is as follows. Promotes megakaryocyte differentiation by enhancing ERK and JNK signaling as well as up-regulating RUNX1 and FLI1 expression. Represses NF-kappa-B transcriptional activity by inhibiting phosphorylation of RELA at 'Ser- 536'. May be involved in early neuronal development. The sequence is that of Maturin (Mturn) from Mus musculus (Mouse).